Here is a 268-residue protein sequence, read N- to C-terminus: Glucosamine-6-phosphate deaminase (268 aa).

The Proton acceptor; for enolization step role is filled by Asp72. The active-site For ring-opening step is Asp141. His143 acts as the Proton acceptor; for ring-opening step in catalysis. The active-site For ring-opening step is the Glu148.

The protein belongs to the glucosamine/galactosamine-6-phosphate isomerase family. NagB subfamily.

The catalysed reaction is alpha-D-glucosamine 6-phosphate + H2O = beta-D-fructose 6-phosphate + NH4(+). The protein operates within amino-sugar metabolism; N-acetylneuraminate degradation; D-fructose 6-phosphate from N-acetylneuraminate: step 5/5. Its activity is regulated as follows. Allosterically activated by N-acetylglucosamine 6-phosphate (GlcNAc6P). Functionally, catalyzes the reversible isomerization-deamination of glucosamine 6-phosphate (GlcN6P) to form fructose 6-phosphate (Fru6P) and ammonium ion. This Borrelia garinii subsp. bavariensis (strain ATCC BAA-2496 / DSM 23469 / PBi) (Borreliella bavariensis) protein is Glucosamine-6-phosphate deaminase.